A 188-amino-acid polypeptide reads, in one-letter code: dCTP deaminase (188 aa).

Residues 111 to 116, 135 to 137, Q156, Y170, and Q180 contribute to the dCTP site; these read KSTYAR and VLE. The active-site Proton donor/acceptor is the E137.

Belongs to the dCTP deaminase family. In terms of assembly, homotrimer.

The enzyme catalyses dCTP + H2O + H(+) = dUTP + NH4(+). It functions in the pathway pyrimidine metabolism; dUMP biosynthesis; dUMP from dCTP (dUTP route): step 1/2. In terms of biological role, catalyzes the deamination of dCTP to dUTP. The sequence is that of dCTP deaminase from Protochlamydia amoebophila (strain UWE25).